Reading from the N-terminus, the 502-residue chain is Probable cytosol aminopeptidase (502 aa).

Lys269 and Asp274 together coordinate Mn(2+). Residue Lys281 is part of the active site. Mn(2+)-binding residues include Asp292, Asp351, and Glu353. Arg355 is an active-site residue.

The protein belongs to the peptidase M17 family. It depends on Mn(2+) as a cofactor.

The protein resides in the cytoplasm. It catalyses the reaction Release of an N-terminal amino acid, Xaa-|-Yaa-, in which Xaa is preferably Leu, but may be other amino acids including Pro although not Arg or Lys, and Yaa may be Pro. Amino acid amides and methyl esters are also readily hydrolyzed, but rates on arylamides are exceedingly low.. It carries out the reaction Release of an N-terminal amino acid, preferentially leucine, but not glutamic or aspartic acids.. Its function is as follows. Presumably involved in the processing and regular turnover of intracellular proteins. Catalyzes the removal of unsubstituted N-terminal amino acids from various peptides. In Shewanella piezotolerans (strain WP3 / JCM 13877), this protein is Probable cytosol aminopeptidase.